A 69-amino-acid polypeptide reads, in one-letter code: UPF0150 protein ssr1258 (69 aa).

Belongs to the UPF0150 family.

The polypeptide is UPF0150 protein ssr1258 (Synechocystis sp. (strain ATCC 27184 / PCC 6803 / Kazusa)).